Here is a 588-residue protein sequence, read N- to C-terminus: Pleckstrin homology domain-containing family A member 4 (588 aa).

A PH domain is found at 54–153; sequence PVHIRGWLHK…WLRALGRASR (100 aa). Disordered stretches follow at residues 155-349 and 495-588; these read EGED…QASM and AGLG…VDHL. Ser-164 is subject to Phosphoserine. Over residues 183-193 the composition is skewed to basic and acidic residues; that stretch reads VNRREEGRISE. The segment covering 211–222 has biased composition (polar residues); sequence TPNSTVDLQTDT. Low complexity-rich tracts occupy residues 246 to 260 and 321 to 334; these read PRPRSAPARRPPLSA and QRTQSTQATSGSST. Ser-562 is modified (phosphoserine).

Its subcellular location is the cytoplasm. It is found in the membrane. Functionally, binds specifically to phosphatidylinositol 3-phosphate (PtdIns3P), but not to other phosphoinositides. This Mus musculus (Mouse) protein is Pleckstrin homology domain-containing family A member 4 (Plekha4).